The following is a 418-amino-acid chain: Serine hydroxymethyltransferase (418 aa).

(6S)-5,6,7,8-tetrahydrofolate-binding positions include Leu121 and 125–127; that span reads GHL. An N6-(pyridoxal phosphate)lysine modification is found at Lys230. 356–358 contributes to the (6S)-5,6,7,8-tetrahydrofolate binding site; that stretch reads SPF.

Belongs to the SHMT family. As to quaternary structure, homodimer. Pyridoxal 5'-phosphate is required as a cofactor.

It is found in the cytoplasm. The enzyme catalyses (6R)-5,10-methylene-5,6,7,8-tetrahydrofolate + glycine + H2O = (6S)-5,6,7,8-tetrahydrofolate + L-serine. The protein operates within one-carbon metabolism; tetrahydrofolate interconversion. It functions in the pathway amino-acid biosynthesis; glycine biosynthesis; glycine from L-serine: step 1/1. Functionally, catalyzes the reversible interconversion of serine and glycine with tetrahydrofolate (THF) serving as the one-carbon carrier. This reaction serves as the major source of one-carbon groups required for the biosynthesis of purines, thymidylate, methionine, and other important biomolecules. Also exhibits THF-independent aldolase activity toward beta-hydroxyamino acids, producing glycine and aldehydes, via a retro-aldol mechanism. The protein is Serine hydroxymethyltransferase of Shewanella sediminis (strain HAW-EB3).